The sequence spans 221 residues: MAVFIGGTGTDVGKTFFSSLILGKYGESLGLKYFKPVQTGDDSDRITLMRLTGLHESYVLKNYYSLAFAGSPHYSSELEGTEIDTDELSRHLYSIRDEKIIIEGAGGLLVPLNRRMLTLEVIRQAEIPLILVAPTSLGAINQTLLSIEAIQNRNIDLKGIYFLGIPDKTTEDNIRTITEWSGVISLGSFFLNSNERISCECFQEECIPKFDLDESIKNILV.

11–16 provides a ligand contact to ATP; it reads DVGKTF. Thr15 provides a ligand contact to Mg(2+). Lys35 is a catalytic residue. Thr39 provides a ligand contact to substrate. Residues Asp44 and 103-106 contribute to the ATP site; that span reads EGAG. Mg(2+) is bound by residues Asp44 and Glu103.

The protein belongs to the dethiobiotin synthetase family. In terms of assembly, homodimer. Mg(2+) is required as a cofactor.

The protein localises to the cytoplasm. It carries out the reaction (7R,8S)-7,8-diammoniononanoate + CO2 + ATP = (4R,5S)-dethiobiotin + ADP + phosphate + 3 H(+). It participates in cofactor biosynthesis; biotin biosynthesis; biotin from 7,8-diaminononanoate: step 1/2. Catalyzes a mechanistically unusual reaction, the ATP-dependent insertion of CO2 between the N7 and N8 nitrogen atoms of 7,8-diaminopelargonic acid (DAPA, also called 7,8-diammoniononanoate) to form a ureido ring. The protein is ATP-dependent dethiobiotin synthetase BioD of Leptospira interrogans serogroup Icterohaemorrhagiae serovar copenhageni (strain Fiocruz L1-130).